The primary structure comprises 350 residues: Serpentine receptor class beta-12 (350 aa).

Topologically, residues 1–21 (MSEANLTECELAYQLTYHPFY) are extracellular. N-linked (GlcNAc...) asparagine glycosylation occurs at Asn5. The helical transmembrane segment at 22 to 42 (MIAQFWSFFVSLLAMPSLIFF) threads the bilayer. The Cytoplasmic portion of the chain corresponds to 43–57 (MVEKVFKLPFHGNLK). The chain crosses the membrane as a helical span at residues 58 to 78 (FLLVSYFIGTFLFASIICFTF). Residues 79 to 103 (GYHFFVPFFVTSNCDLIINATLFKY) are Extracellular-facing. Asn97 carries N-linked (GlcNAc...) asparagine glycosylation. Residues 104–124 (GHMIALIFMTIPMILPTAFTV) traverse the membrane as a helical segment. Topologically, residues 125-141 (ERFVALKMAHSYEHVRT) are cytoplasmic. Residues 142–162 (LLGPVLVLVVIAIDSMFLYDI) traverse the membrane as a helical segment. Residues 163–189 (YGQEKFDKPFINFILVPATSALQFNSF) are Extracellular-facing. The chain crosses the membrane as a helical span at residues 190-210 (LWYMLYLKITNFICNLILLFI). At 211-243 (HKILHQSSRYRRKNVSLSVKYEMQEISQSSRFT) the chain is on the cytoplasmic side. Residues 244 to 264 (LIVTFTHLLFFGWYVSTILLI) form a helical membrane-spanning segment. The Extracellular portion of the chain corresponds to 265-282 (RTVGPDFFRGFINYTVMR). Asn277 carries an N-linked (GlcNAc...) asparagine glycan. The chain crosses the membrane as a helical span at residues 283-303 (GVYCATPTYNLVIVFIGFKAL). Residues 304 to 350 (NHLNFKRNNKVQSTIQIKSTGQEGAENYDNAISNYWDSVYTMNKSKL) lie on the Cytoplasmic side of the membrane.

It belongs to the nematode receptor-like protein srb family. Expressed throughout the head.

It localises to the cell membrane. It is found in the perikaryon. Its subcellular location is the cell projection. The protein resides in the dendrite. G-protein coupled receptor. Plays a role in the navigational capacity of sperm and promotes the targeting of sperm derived from males to the fertilization site in the uterus of hermaphrodites. This is Serpentine receptor class beta-12 from Caenorhabditis elegans.